Here is a 204-residue protein sequence, read N- to C-terminus: dITP/XTP pyrophosphatase (204 aa).

8 to 13 provides a ligand contact to substrate; it reads TKNAGK. The active-site Proton acceptor is Asp-70. Asp-70 is a binding site for Mg(2+). Residues Ser-71, 153 to 156, Lys-176, and 181 to 182 contribute to the substrate site; these read FGYD and HR.

It belongs to the HAM1 NTPase family. As to quaternary structure, homodimer. The cofactor is Mg(2+).

It carries out the reaction XTP + H2O = XMP + diphosphate + H(+). It catalyses the reaction dITP + H2O = dIMP + diphosphate + H(+). The enzyme catalyses ITP + H2O = IMP + diphosphate + H(+). In terms of biological role, pyrophosphatase that catalyzes the hydrolysis of nucleoside triphosphates to their monophosphate derivatives, with a high preference for the non-canonical purine nucleotides XTP (xanthosine triphosphate), dITP (deoxyinosine triphosphate) and ITP. Seems to function as a house-cleaning enzyme that removes non-canonical purine nucleotides from the nucleotide pool, thus preventing their incorporation into DNA/RNA and avoiding chromosomal lesions. The polypeptide is dITP/XTP pyrophosphatase (Geobacillus kaustophilus (strain HTA426)).